Here is a 250-residue protein sequence, read N- to C-terminus: Peptidyl-tRNA hydrolase, mitochondrial (250 aa).

Residues 1–45 (MRLLSGASASRIPCPLLSLARARARCLPVPASATACRAASSSAAA) constitute a mitochondrion transit peptide. Tyr-68 provides a ligand contact to tRNA. Residue His-73 is the Proton acceptor of the active site. TRNA-binding residues include Phe-118, Asn-120, and Asn-166.

This sequence belongs to the PTH family.

It is found in the mitochondrion. The enzyme catalyses an N-acyl-L-alpha-aminoacyl-tRNA + H2O = an N-acyl-L-amino acid + a tRNA + H(+). Functionally, the natural substrate for this enzyme may be peptidyl-tRNAs which drop off the ribosome during protein synthesis. The polypeptide is Peptidyl-tRNA hydrolase, mitochondrial (Oryza sativa subsp. japonica (Rice)).